Reading from the N-terminus, the 271-residue chain is uncharacterized protein (271 aa).

This is an uncharacterized protein from Mycobacterium tuberculosis (strain CDC 1551 / Oshkosh).